Here is a 250-residue protein sequence, read N- to C-terminus: Probable transcriptional regulatory protein PERMA_0079 (250 aa).

Belongs to the TACO1 family.

It localises to the cytoplasm. The chain is Probable transcriptional regulatory protein PERMA_0079 from Persephonella marina (strain DSM 14350 / EX-H1).